We begin with the raw amino-acid sequence, 70 residues long: UPF0150 protein TM_1311 (70 aa).

Belongs to the UPF0150 family.

This is UPF0150 protein TM_1311 from Thermotoga maritima (strain ATCC 43589 / DSM 3109 / JCM 10099 / NBRC 100826 / MSB8).